A 380-amino-acid polypeptide reads, in one-letter code: Cytochrome b (380 aa).

Transmembrane regions (helical) follow at residues 34 to 54 (FGSL…LLAT), 78 to 99 (WLIR…YLHI), 114 to 134 (WNTG…GYVL), and 179 to 199 (FFAL…IHLT). Positions 84 and 98 each coordinate heme b. Residues His-183 and His-197 each contribute to the heme b site. Position 202 (His-202) interacts with a ubiquinone. 4 helical membrane-spanning segments follow: residues 227–247 (LKDI…ALFS), 289–309 (LGGV…PFLH), 321–341 (ISQL…WVGS), and 348–368 (FIII…ILFP).

It belongs to the cytochrome b family. As to quaternary structure, the cytochrome bc1 complex contains 11 subunits: 3 respiratory subunits (MT-CYB, CYC1 and UQCRFS1), 2 core proteins (UQCRC1 and UQCRC2) and 6 low-molecular weight proteins (UQCRH/QCR6, UQCRB/QCR7, UQCRQ/QCR8, UQCR10/QCR9, UQCR11/QCR10 and a cleavage product of UQCRFS1). This cytochrome bc1 complex then forms a dimer. The cofactor is heme b.

The protein localises to the mitochondrion inner membrane. In terms of biological role, component of the ubiquinol-cytochrome c reductase complex (complex III or cytochrome b-c1 complex) that is part of the mitochondrial respiratory chain. The b-c1 complex mediates electron transfer from ubiquinol to cytochrome c. Contributes to the generation of a proton gradient across the mitochondrial membrane that is then used for ATP synthesis. This Pelecanoides magellani (Magellanic diving petrel) protein is Cytochrome b (MT-CYB).